The following is a 78-amino-acid chain: Small ribosomal subunit protein uS17 (78 aa).

The protein belongs to the universal ribosomal protein uS17 family. In terms of assembly, part of the 30S ribosomal subunit.

Its function is as follows. One of the primary rRNA binding proteins, it binds specifically to the 5'-end of 16S ribosomal RNA. In Rhizobium meliloti (strain 1021) (Ensifer meliloti), this protein is Small ribosomal subunit protein uS17.